The primary structure comprises 556 residues: Glutamine--tRNA ligase (556 aa).

Residues 34 to 44 (PEPNGYLHIGH) carry the 'HIGH' region motif. ATP is bound by residues 35-37 (EPN) and 41-47 (HIGHAKS). Asp67 and Tyr212 together coordinate L-glutamine. Residues Thr231, 261–262 (RL), and 269–271 (MSK) contribute to the ATP site. The 'KMSKS' region motif lies at 268 to 272 (IMSKR).

Belongs to the class-I aminoacyl-tRNA synthetase family. As to quaternary structure, monomer.

The protein localises to the cytoplasm. It carries out the reaction tRNA(Gln) + L-glutamine + ATP = L-glutaminyl-tRNA(Gln) + AMP + diphosphate. In Sodalis glossinidius (strain morsitans), this protein is Glutamine--tRNA ligase.